The chain runs to 361 residues: Septin-12 (361 aa).

The Septin-type G domain maps to 45–316 (MGFEFNIMVV…ENYRIIRLKE (272 aa)). The tract at residues 45–318 (MGFEFNIMVV…YRIIRLKESH (274 aa)) is interaction with SEPTIN7. A G1 motif region spans residues 55 to 62 (GQSGLGKS). Residues 55-62 (GQSGLGKS), Thr88, Gly114, 194-202 (RADSLTIEE), Gly250, and Arg265 contribute to the GTP site. The segment at 111–114 (DTPG) is G3 motif. Positions 193 to 196 (ARAD) are G4 motif. The self-association (via N-terminus) to polymerize octameric septin 12-7-6-2/4-2/4-6-7-12 filaments stretch occupies residues 257–361 (VNGRCVLGRK…WAEDNSDEDF (105 aa)). Positions 333-361 (PPPAPTGTRASPGPAKMCRWAEDNSDEDF) are disordered. Residues 338-347 (TGTRASPGPA) are compositionally biased toward low complexity.

It belongs to the TRAFAC class TrmE-Era-EngA-EngB-Septin-like GTPase superfamily. Septin GTPase family. In terms of assembly, septins polymerize into heterooligomeric protein complexes that form filaments, and can associate with cellular membranes, actin filaments and microtubules. GTPase activity is required for filament formation. Interacts with SEPTIN6 and SEPTIN11. Component of a octameric complex consisting of SEPTIN12, SEPTIN7, SEPTIN6 and SEPTIN2 or SEPTIN4 in the order 12-7-6-2-2-6-7-12 or 12-7-6-4-4-6-7-12 and located in the sperm annulus; the octamer polymerizes into filaments via the SEPTIN12 N- and C-termini; the SEPTIN12:SEPTIN7 association is mediated by the GTP-binding domains. Interacts with SPAG4 and LMNB1. Associates with alpha- and beta-tubulins.

It localises to the cytoplasm. The protein resides in the cytoskeleton. Its subcellular location is the spindle. It is found in the cell projection. The protein localises to the cilium. It localises to the flagellum. In terms of biological role, filament-forming cytoskeletal GTPase. May play a role in cytokinesis (Potential). Involved in spermatogenesis. Involved in the morphogenesis of sperm heads and the elongation of sperm tails probably implicating the association with alpha- and beta-tubulins. Forms a filamentous structure with SEPTIN7, SEPTIN6, SEPTIN2 and probably SEPTIN4 at the sperm annulus which is required for the structural integrity and motility of the sperm tail during postmeiotic differentiation. The sequence is that of Septin-12 from Bos taurus (Bovine).